Here is a 105-residue protein sequence, read N- to C-terminus: U2-lycotoxin-Ls1a (105 aa).

The N-terminal stretch at 1–17 (MIKYVLISALLVVAVYS) is a signal peptide. Residues 18–41 (FTIEDNEDALLEEAEDELDTEEER) constitute a propeptide that is removed on maturation. Disulfide bonds link C51–C67, C58–C97, C60–C83, and C69–C81.

The protein belongs to the neurotoxin 04 (omega-agtx) family. 01 (type I omega-agtx) subfamily. As to expression, expressed by the venom gland.

It localises to the secreted. Its function is as follows. Insecticidal to house crickets. It induces an excitatory slow-onset impact that leads to irreversible spastic paralysis. It also modifies human voltage-gated potassium channel Kv1.5/KCNA5. Most likely, it binds to the voltage-sensing domain of the channel, suggesting it does not block the pore but prevents its opening at physiological membrane potentials. The recombinant peptide binds to the channel in an irreversible manner and slows down the hKv1.5 current activation kinetics. It is not toxic to mice, when intracranially injected (at 0.5 ug/g mouse). This Lycosa singoriensis (Wolf spider) protein is U2-lycotoxin-Ls1a.